We begin with the raw amino-acid sequence, 101 residues long: Ribonuclease kappa-B (101 aa).

Helical transmembrane passes span 13 to 33 (ACGI…GVFF) and 68 to 88 (VSYN…FSFC).

It belongs to the RNase K family.

It is found in the membrane. Functionally, endoribonuclease which preferentially cleaves ApU and ApG phosphodiester bonds. The sequence is that of Ribonuclease kappa-B (rnasek-b) from Xenopus laevis (African clawed frog).